The following is a 735-amino-acid chain: DNA ligase 1 (735 aa).

Basic and acidic residues predominate over residues 1 to 11 (MAGDKQGDKQA). The tract at residues 1–23 (MAGDKQGDKQAETTSVPAEARER) is disordered. Residues 48-52 (DAEFD), 97-98 (SL), and Glu-128 contribute to the NAD(+) site. The active-site N6-AMP-lysine intermediate is the Lys-130. NAD(+) is bound by residues Arg-151, Glu-188, Lys-305, and Lys-329. Cys-423, Cys-426, Cys-442, and Cys-448 together coordinate Zn(2+). Residues 643–732 (EGPRPLEGLT…PEAAADVALS (90 aa)) enclose the BRCT domain.

It belongs to the NAD-dependent DNA ligase family. LigA subfamily. Mg(2+) serves as cofactor. It depends on Mn(2+) as a cofactor.

It catalyses the reaction NAD(+) + (deoxyribonucleotide)n-3'-hydroxyl + 5'-phospho-(deoxyribonucleotide)m = (deoxyribonucleotide)n+m + AMP + beta-nicotinamide D-nucleotide.. Functionally, DNA ligase that catalyzes the formation of phosphodiester linkages between 5'-phosphoryl and 3'-hydroxyl groups in double-stranded DNA using NAD as a coenzyme and as the energy source for the reaction. It is essential for DNA replication and repair of damaged DNA. The sequence is that of DNA ligase 1 from Streptomyces coelicolor (strain ATCC BAA-471 / A3(2) / M145).